The sequence spans 164 residues: Aspartic proteinase nepenthesin-1 (164 aa).

A Peptidase A1 domain is found at 17–164 (YLMXLSIGTP…VSFVSAQCGA (148 aa)). Residue D35 is part of the active site. N93 carries an N-linked (GlcNAc...) asparagine glycan.

It belongs to the peptidase A1 family. In terms of tissue distribution, parenchymal cells surrounding the secretory glands.

It localises to the secreted. The enzyme catalyses Similar to pepsin, but also cleaves on either side of Asp and at Lys-|-Arg.. With respect to regulation, inhibited by pepstatin and by diazoacetyl-D,L-norleucine methyl ester (DAN) in the presence of Cu(2+) ions. In terms of biological role, extracellular proteinase found in the pitcher fluid of carnivorous plants. Digest prey for nitrogen uptake. This is Aspartic proteinase nepenthesin-1 from Nepenthes distillatoria (Pitcher plant).